The chain runs to 1023 residues: Lon protease homolog (1023 aa).

An ATP-binding site is contributed by 515 to 522 (GPPGVGKT). The Lon proteolytic domain occupies 810–1003 (TNMIGVINGL…IEIITDPNVI (194 aa)). Ser-906 is an active-site residue.

Belongs to the peptidase S16 family.

This Acanthamoeba polyphaga (Amoeba) protein is Lon protease homolog.